The chain runs to 289 residues: 4-diphosphocytidyl-2-C-methyl-D-erythritol kinase (289 aa).

K10 is an active-site residue. 94-104 (PVAAGLAGGSS) serves as a coordination point for ATP. Residue D136 is part of the active site.

It belongs to the GHMP kinase family. IspE subfamily.

It catalyses the reaction 4-CDP-2-C-methyl-D-erythritol + ATP = 4-CDP-2-C-methyl-D-erythritol 2-phosphate + ADP + H(+). It functions in the pathway isoprenoid biosynthesis; isopentenyl diphosphate biosynthesis via DXP pathway; isopentenyl diphosphate from 1-deoxy-D-xylulose 5-phosphate: step 3/6. Catalyzes the phosphorylation of the position 2 hydroxy group of 4-diphosphocytidyl-2C-methyl-D-erythritol. This chain is 4-diphosphocytidyl-2-C-methyl-D-erythritol kinase, found in Bacillus cytotoxicus (strain DSM 22905 / CIP 110041 / 391-98 / NVH 391-98).